The following is a 625-amino-acid chain: tRNA uridine 5-carboxymethylaminomethyl modification enzyme MnmG (625 aa).

An FAD-binding site is contributed by 11–16 (GAGHAG). 271–285 (GPRYCPSIETKIVTF) is an NAD(+) binding site.

This sequence belongs to the MnmG family. In terms of assembly, homodimer. Heterotetramer of two MnmE and two MnmG subunits. FAD serves as cofactor.

Its subcellular location is the cytoplasm. Functionally, NAD-binding protein involved in the addition of a carboxymethylaminomethyl (cmnm) group at the wobble position (U34) of certain tRNAs, forming tRNA-cmnm(5)s(2)U34. The chain is tRNA uridine 5-carboxymethylaminomethyl modification enzyme MnmG from Parabacteroides distasonis (strain ATCC 8503 / DSM 20701 / CIP 104284 / JCM 5825 / NCTC 11152).